A 752-amino-acid polypeptide reads, in one-letter code: Probable beta-glucosidase D (752 aa).

Positions 1–18 (MRFVSLAVGAALLGAAGA) are cleaved as a signal peptide. N-linked (GlcNAc...) asparagine glycosylation is found at N187 and N237. The active site involves D265. N-linked (GlcNAc...) asparagine glycosylation is found at N299, N343, N441, N510, N532, N571, N586, N638, N661, and N743.

It belongs to the glycosyl hydrolase 3 family.

The protein resides in the secreted. The catalysed reaction is Hydrolysis of terminal, non-reducing beta-D-glucosyl residues with release of beta-D-glucose.. Its pathway is glycan metabolism; cellulose degradation. Functionally, beta-glucosidases are one of a number of cellulolytic enzymes involved in the degradation of cellulosic biomass. Catalyzes the last step releasing glucose from the inhibitory cellobiose. This chain is Probable beta-glucosidase D (bglD), found in Aspergillus oryzae (strain ATCC 42149 / RIB 40) (Yellow koji mold).